Consider the following 187-residue polypeptide: Phosphoheptose isomerase (187 aa).

The SIS domain occupies 34-187 (CIEALKNQKK…ILCSLIDESF (154 aa)). 49-51 (NGG) contacts substrate. Residues His58 and Glu62 each contribute to the Zn(2+) site. Residues Glu62, 91-92 (ND), 117-119 (STS), Ser122, and Gln169 contribute to the substrate site. Positions 169 and 177 each coordinate Zn(2+).

It belongs to the SIS family. GmhA subfamily. In terms of assembly, homotetramer. It depends on Zn(2+) as a cofactor.

The protein resides in the cytoplasm. It catalyses the reaction 2 D-sedoheptulose 7-phosphate = D-glycero-alpha-D-manno-heptose 7-phosphate + D-glycero-beta-D-manno-heptose 7-phosphate. Its pathway is carbohydrate biosynthesis; D-glycero-D-manno-heptose 7-phosphate biosynthesis; D-glycero-alpha-D-manno-heptose 7-phosphate and D-glycero-beta-D-manno-heptose 7-phosphate from sedoheptulose 7-phosphate: step 1/1. Its function is as follows. Catalyzes the isomerization of sedoheptulose 7-phosphate in D-glycero-D-manno-heptose 7-phosphate. The sequence is that of Phosphoheptose isomerase from Nitratiruptor sp. (strain SB155-2).